Reading from the N-terminus, the 162-residue chain is Xylulose kinase (162 aa).

The segment at 16 to 39 (GGHSATPRPATGPAGPAAHSGRHQ) is disordered. Positions 20 to 33 (ATPRPATGPAGPAA) are enriched in low complexity.

Belongs to the FGGY kinase family.

It carries out the reaction D-xylulose + ATP = D-xylulose 5-phosphate + ADP + H(+). Functionally, catalyzes the phosphorylation of D-xylulose to D-xylulose 5-phosphate. The chain is Xylulose kinase from Actinoplanes sp. (strain ATCC 31351 / 3876) (Ampullariella sp.).